The chain runs to 552 residues: Glutathione reductase, chloroplastic/mitochondrial (552 aa).

A chloroplast and mitochondrion-targeting transit peptide spans 1-60 (MNQAMATPLSLSCCSPTLTRSTLFFTKTFPFSRSFSTPLPLSTKTLISLSPPHRTFAVRA). FAD-binding residues include Ser-83, Gly-84, Glu-103, Thr-120, Cys-121, and Lys-129. Position 83 (Ser-83) interacts with glutathione. A disulfide bridge links Cys-121 with Cys-126. A glutathione-binding site is contributed by Tyr-178. Gly-194 is an FAD binding site. The NADP(+) site is built by Gly-254, Ile-257, Glu-260, Arg-277, Arg-283, and Gly-341. The FAD site is built by Asp-382 and Thr-390. Ala-420 is a binding site for NADP(+). Residue His-515 coordinates FAD. His-515 functions as the Proton acceptor in the catalytic mechanism. The tract at residues 527-552 (TPTRKVRKNQASQGKSDSKAKAVAGS) is disordered.

It belongs to the class-I pyridine nucleotide-disulfide oxidoreductase family. Homodimer. The cofactor is FAD.

The protein resides in the plastid. It is found in the chloroplast. Its subcellular location is the mitochondrion. The enzyme catalyses 2 glutathione + NADP(+) = glutathione disulfide + NADPH + H(+). Its function is as follows. Catalyzes the reduction of glutathione disulfide (GSSG) to reduced glutathione (GSH). Maintains high levels of GSH in the chloroplast. The chain is Glutathione reductase, chloroplastic/mitochondrial (GR) from Pisum sativum (Garden pea).